A 129-amino-acid chain; its full sequence is Small ribosomal subunit protein uS11 (129 aa).

Belongs to the universal ribosomal protein uS11 family. As to quaternary structure, part of the 30S ribosomal subunit. Interacts with proteins S7 and S18. Binds to IF-3.

Located on the platform of the 30S subunit, it bridges several disparate RNA helices of the 16S rRNA. Forms part of the Shine-Dalgarno cleft in the 70S ribosome. This Baumannia cicadellinicola subsp. Homalodisca coagulata protein is Small ribosomal subunit protein uS11.